Reading from the N-terminus, the 839-residue chain is Probable alpha-glucuronidase A (839 aa).

Positions 1–18 (MRWSFLTVLLWLVSLTGA) are cleaved as a signal peptide. Residues asparagine 49, asparagine 101, asparagine 148, asparagine 221, asparagine 278, asparagine 309, asparagine 342, asparagine 464, asparagine 526, asparagine 575, asparagine 681, and asparagine 731 are each glycosylated (N-linked (GlcNAc...) asparagine).

This sequence belongs to the glycosyl hydrolase 67 family.

The protein resides in the secreted. The enzyme catalyses an alpha-D-glucuronoside + H2O = D-glucuronate + an alcohol. Functionally, alpha-glucuronidase involved in the hydrolysis of xylan, a major structural heterogeneous polysaccharide found in plant biomass representing the second most abundant polysaccharide in the biosphere, after cellulose. Releases 4-O-methylglucuronic acid from xylan. The protein is Probable alpha-glucuronidase A (aguA) of Aspergillus flavus (strain ATCC 200026 / FGSC A1120 / IAM 13836 / NRRL 3357 / JCM 12722 / SRRC 167).